Here is a 1498-residue protein sequence, read N- to C-terminus: MSFMDQIPGGGNYPKLPVECLPNFPIQPSLTFRGRNDSHKLKNFISEIMLNMSMISWPNDASRIVYCRRHLLNPAAQWANDFVQEQGILEITFDTFIQGLYQHFYKPPDINKIFNAITQLSEAKLGIERLNQRFRKIWDRMPPDFMTEKAAIMTYTRLLTKETYNIVRMHKPETLKDAMEEAYQTTALTERFFPGFELDADGDTIIGATTHLQEEYDSDYDSEDNLTQNRYVHTVRTRRSYNKPMSNHRNRRNNNASREECIKNRLCFYCKKEGHRLNECRARKAVLTDLELESKDQQTLFIKTLPIVHYIAIPEMDNTAEKTIKIQNTKVKTLFDSGSPTSFIRRDIVELLKYEIYETPPLRFRGFVATKSAVTSEAVTIDLKINDLQITLAAYILDNMDYQLLIGNPILRRYPKILHTVLNTRESPDSLKPKTYRSETVNNVRTYSAGNRGNPRNIKLSFAPTILEATDPKSAGNRGNPRNTKLSLAPTILEATDPKSAGNRGDSRTKTLSLATTTPAAIDPLTTLDNPGSTQSTFAQFPIPEEASILEEDGKYSNVVSTIQSVEPNATDHSNKDTFCTLPVWLQQKYREIIRNDLPPRPADINNIPVKHDIEIKPGARLPRLQPYHVTEKNEQEINKIVQKLLDNKFIVPSKSPCSSPVVLVPKKDGTFRLCVDYRTLNKATISDPFPLPRIDNLLSRIGNAQIFTTLDLHSGYHQIPMEPKDRYKTAFVTPSGKYEYTVMPFGLVNAPSTFARYMADTFRDLRFVNVYLDDILIFSESPEEHWKHLDTVLERLKNENLIVKKKKCKFASEETEFLGYSIGIQKIAPLQHKCAAIRDFPTPKTVKQAQRFLGMINYYRRFIPNCSKIAQPIQLFICDKSQWTEKQDKAIEKLKAALCNSPVLVPFNNKANYRLTTDASKDGIGAVLEEVDNKNKLVGVVGYFSKSLESAQKNYPAGELELLGIIKALHHFRYMLHGKHFTLRTDHISLLSLQNKNEPARRVQRWLDDLATYDFTLEYLAGPKNVVADAISRAIYTITPETSRPIDTESWKSYYKSDPLCSAVLIHMKELTQHNVTPEDMSAFRSYQKKLELSETFRKNYSLEDEMIYYQDRLVVPIKQQNAVMRLYHDHTLFGGHFGVTVTLAKISPIYYWPKLQHSIIQYIRTCVQCQLIKSHRPRLHGLLQPLPIAEGRWLDISMDFVTGLPPTSNNLNMILVVVDRFSKRAHFIATRKTLDATQLIDLLFRYIFSYHGFPRTITSDRDVRMTADKYQELTKRLGIKSTMSSANHPQTDGQSERTIQTLNRLLRAYVSTNIQNWHVYLPQIEFVYNSTPTRTLGKSPFEIDLGYLPNTPAIKSDDEVNARSFTAVELAKHLKALTIQTKEQLEHAQIEMETNNNQRRKPLLLNIGDHVLVHRDAYFKKGAYMKVQQIYVGPFRVVKKINDNAYELDLNSHKKKHRVINVQFLKSLYTVQTRTQRINQSAPLRELREHTKLLHS.

Residues 265–282 (RLCFYCKKEGHRLNECRA) form a CCHC-type zinc finger. D336 functions as the For protease activity; shared with dimeric partner in the catalytic mechanism. Positions 470 to 490 (TDPKSAGNRGNPRNTKLSLAP) are disordered. The region spanning 646–823 (LDNKFIVPSK…EETEFLGYSI (178 aa)) is the Reverse transcriptase domain. The Mg(2+) site is built by D712, D774, and D775. The RNase H Ty3/gyspy-type domain occupies 919–1037 (DASKDGIGAV…VADAISRAIY (119 aa)). Positions 1132–1171 (HTLFGGHFGVTVTLAKISPIYYWPKLQHSIIQYIRTCVQC) are integrase-type zinc finger-like. The 166-residue stretch at 1185–1350 (LQPLPIAEGR…SPFEIDLGYL (166 aa)) folds into the Integrase catalytic domain. Positions 1201 and 1262 each coordinate Mg(2+).

As to quaternary structure, the protease is a homodimer, whose active site consists of two apposed aspartic acid residues. In terms of processing, initially, virus-like particles (VLPs) are composed of the structural unprocessed proteins Gag and Gag-Pol, and also contain the host initiator methionine tRNA (tRNA(i)-Met) which serves as a primer for minus-strand DNA synthesis, and a dimer of genomic Ty RNA. Processing of the polyproteins occurs within the particle and proceeds by an ordered pathway, called maturation. First, the protease (PR) is released by autocatalytic cleavage of the Gag-Pol polyprotein, and this cleavage is a prerequisite for subsequent processing at the remaining sites to release the mature structural and catalytic proteins. Maturation takes place prior to the RT reaction and is required to produce transposition-competent VLPs.

It localises to the cytoplasm. The protein localises to the nucleus. It carries out the reaction DNA(n) + a 2'-deoxyribonucleoside 5'-triphosphate = DNA(n+1) + diphosphate. The enzyme catalyses Endonucleolytic cleavage to 5'-phosphomonoester.. Its function is as follows. Capsid protein (CA) is the structural component of the virus-like particle (VLP), forming the shell that encapsulates the genomic RNA-nucleocapsid complex. Nucleocapsid protein p11 (NC) forms the nucleocore that coats the retro-elements dimeric RNA. Binds these RNAs through its zinc fingers. Promotes primer tRNA(i)-Met annealing to the multipartite primer-binding site (PBS), dimerization of Ty3 RNA and initiation of reverse transcription. Functionally, the aspartyl protease (PR) mediates the proteolytic cleavages of the Gag and Gag-Pol polyproteins after assembly of the VLP. In terms of biological role, reverse transcriptase/ribonuclease H (RT) is a multifunctional enzyme that catalyzes the conversion of the retro-elements RNA genome into dsDNA within the VLP. The enzyme displays a DNA polymerase activity that can copy either DNA or RNA templates, and a ribonuclease H (RNase H) activity that cleaves the RNA strand of RNA-DNA heteroduplexes during plus-strand synthesis and hydrolyzes RNA primers. The conversion leads to a linear dsDNA copy of the retrotransposon that includes long terminal repeats (LTRs) at both ends. Its function is as follows. Integrase (IN) targets the VLP to the nucleus, where a subparticle preintegration complex (PIC) containing at least integrase and the newly synthesized dsDNA copy of the retrotransposon must transit the nuclear membrane. Once in the nucleus, integrase performs the integration of the dsDNA into the host genome. This Saccharomyces cerevisiae (strain ATCC 204508 / S288c) (Baker's yeast) protein is Transposon Ty3-I Gag-Pol polyprotein (TY3B-I).